The following is a 90-amino-acid chain: Small ribosomal subunit protein uS15c (90 aa).

Belongs to the universal ribosomal protein uS15 family. As to quaternary structure, part of the 30S ribosomal subunit.

Its subcellular location is the plastid. The protein localises to the chloroplast. This chain is Small ribosomal subunit protein uS15c (rps15), found in Mesostigma viride (Green alga).